The chain runs to 297 residues: PIH1 domain-containing protein 1 (297 aa).

The protein belongs to the PIH1 family.

The protein localises to the nucleus. In terms of biological role, involved in the assembly of C/D box small nucleolar ribonucleoprotein (snoRNP) particles. Recruits the SWI/SNF complex to the core promoter of rRNA genes and enhances pre-rRNA transcription. Mediates interaction of TELO2 with the R2TP complex which is necessary for the stability of MTOR and SMG1. Positively regulates the assembly and activity of the mTORC1 complex. This chain is PIH1 domain-containing protein 1 (pih1d1), found in Xenopus laevis (African clawed frog).